The chain runs to 309 residues: HPr kinase/phosphorylase (309 aa).

Active-site residues include H144 and K165. 159 to 166 (GDSGLGKS) lines the ATP pocket. A Mg(2+)-binding site is contributed by S166. D183 serves as the catalytic Proton acceptor; for phosphorylation activity. Proton donor; for dephosphorylation activity. Residues 206–215 (IEVRGLGLID) are important for the catalytic mechanism of both phosphorylation and dephosphorylation. E207 serves as a coordination point for Mg(2+). R249 is a catalytic residue. Residues 270-275 (PIRQGR) are important for the catalytic mechanism of dephosphorylation.

It belongs to the HPrK/P family. As to quaternary structure, homohexamer. Mg(2+) is required as a cofactor.

The enzyme catalyses [HPr protein]-L-serine + ATP = [HPr protein]-O-phospho-L-serine + ADP + H(+). It carries out the reaction [HPr protein]-O-phospho-L-serine + phosphate + H(+) = [HPr protein]-L-serine + diphosphate. In terms of biological role, catalyzes the ATP- as well as the pyrophosphate-dependent phosphorylation of a specific serine residue in HPr, a phosphocarrier protein of the phosphoenolpyruvate-dependent sugar phosphotransferase system (PTS). HprK/P also catalyzes the pyrophosphate-producing, inorganic phosphate-dependent dephosphorylation (phosphorolysis) of seryl-phosphorylated HPr (P-Ser-HPr). The protein is HPr kinase/phosphorylase (hprK) of Mycoplasmopsis pulmonis (strain UAB CTIP) (Mycoplasma pulmonis).